Consider the following 348-residue polypeptide: Dihydroorotase (348 aa).

Zn(2+) contacts are provided by His14 and His16. Substrate contacts are provided by residues His16–Arg18 and Asn42. 3 residues coordinate Zn(2+): Lys100, His137, and His175. Lys100 carries the post-translational modification N6-carboxylysine. His137 contributes to the substrate binding site. Leu220 contributes to the substrate binding site. Position 248 (Asp248) interacts with Zn(2+). The active site involves Asp248. His252 and Ala264 together coordinate substrate.

This sequence belongs to the metallo-dependent hydrolases superfamily. DHOase family. Class II DHOase subfamily. Homodimer. Zn(2+) serves as cofactor.

It catalyses the reaction (S)-dihydroorotate + H2O = N-carbamoyl-L-aspartate + H(+). It functions in the pathway pyrimidine metabolism; UMP biosynthesis via de novo pathway; (S)-dihydroorotate from bicarbonate: step 3/3. Catalyzes the reversible cyclization of carbamoyl aspartate to dihydroorotate. This is Dihydroorotase from Synechococcus sp. (strain CC9605).